The sequence spans 338 residues: UPF0284 protein TV0153 (338 aa).

Belongs to the UPF0284 family.

The polypeptide is UPF0284 protein TV0153 (Thermoplasma volcanium (strain ATCC 51530 / DSM 4299 / JCM 9571 / NBRC 15438 / GSS1)).